A 123-amino-acid polypeptide reads, in one-letter code: Large ribosomal subunit protein uL29 (123 aa).

This sequence belongs to the universal ribosomal protein uL29 family.

The protein is Large ribosomal subunit protein uL29 (RPL35) of Babesia bovis.